Here is a 194-residue protein sequence, read N- to C-terminus: ATP-dependent Clp protease proteolytic subunit (194 aa).

The active-site Nucleophile is S98. Residue H123 is part of the active site.

This sequence belongs to the peptidase S14 family. Fourteen ClpP subunits assemble into 2 heptameric rings which stack back to back to give a disk-like structure with a central cavity, resembling the structure of eukaryotic proteasomes.

The protein resides in the cytoplasm. The enzyme catalyses Hydrolysis of proteins to small peptides in the presence of ATP and magnesium. alpha-casein is the usual test substrate. In the absence of ATP, only oligopeptides shorter than five residues are hydrolyzed (such as succinyl-Leu-Tyr-|-NHMec, and Leu-Tyr-Leu-|-Tyr-Trp, in which cleavage of the -Tyr-|-Leu- and -Tyr-|-Trp bonds also occurs).. Cleaves peptides in various proteins in a process that requires ATP hydrolysis. Has a chymotrypsin-like activity. Plays a major role in the degradation of misfolded proteins. The sequence is that of ATP-dependent Clp protease proteolytic subunit from Syntrophotalea carbinolica (strain DSM 2380 / NBRC 103641 / GraBd1) (Pelobacter carbinolicus).